The sequence spans 541 residues: Carboxypeptidase Y homolog A (541 aa).

An N-terminal signal peptide occupies residues 1–17; sequence MKLLMTGLLASAAVAAA. The propeptide occupies 18-122; the sequence is QEQQVLQAEG…KLQSYDLRVK (105 aa). 5 disulfides stabilise this stretch: cysteine 177–cysteine 417, cysteine 311–cysteine 325, cysteine 335–cysteine 358, cysteine 342–cysteine 351, and cysteine 380–cysteine 387. N-linked (GlcNAc...) asparagine glycosylation is present at asparagine 208. Residue serine 264 is part of the active site. Aspartate 456 is an active-site residue. An N-linked (GlcNAc...) asparagine glycan is attached at asparagine 507. Histidine 518 is a catalytic residue.

Belongs to the peptidase S10 family.

It is found in the vacuole. The enzyme catalyses Release of a C-terminal amino acid with broad specificity.. Vacuolar carboxypeptidase involved in degradation of small peptides. Digests preferentially peptides containing an aliphatic or hydrophobic residue in P1' position, as well as methionine, leucine or phenylalanine in P1 position of ester substrate. In Arthroderma otae (strain ATCC MYA-4605 / CBS 113480) (Microsporum canis), this protein is Carboxypeptidase Y homolog A (CPYA).